We begin with the raw amino-acid sequence, 2049 residues long: Polyglutamine-repeat protein pqn-41 (2049 aa).

Positions 1-58 (MKPKKLQQGSDSAHTSDTESTKTCEKTAKKLPKTQKKLQKSKKTAKKRRDEEFRIFFP) are disordered. Residues 1-1601 (MKPKKLQQGS…TTSQHQQSIQ (1601 aa)) form a sufficient to prevent linker cell death region. The segment covering 14 to 28 (HTSDTESTKTCEKTA) has biased composition (basic and acidic residues). Residues 29–47 (KKLPKTQKKLQKSKKTAKK) show a composition bias toward basic residues. Coiled-coil stretches lie at residues 264-302 (RRQE…ANSD) and 396-432 (TNAG…DRNH). A disordered region spans residues 459–492 (RGRNSTENSDSESSSEASEPPDDVITKEEPTDFS). Over residues 463–476 (STENSDSESSSEAS) the composition is skewed to low complexity. 3 coiled-coil regions span residues 686-730 (ESFE…SFET), 756-796 (ISAD…REFS), and 822-880 (QSSI…ARKL). Low complexity predominate over residues 1134 to 1150 (QQQHNHQNFQQQQQGNH). Disordered stretches follow at residues 1134–1198 (QQQH…ENAA), 1236–1265 (AAAA…QQQN), 1481–1616 (YKQS…GAAY), and 1636–1661 (ATPK…TSQA). A compositionally biased stretch (basic residues) spans 1162-1171 (QKRKYTKRKA). The segment covering 1176–1194 (AVASSSDQNGMKSPGSSAM) has biased composition (polar residues). Low complexity predominate over residues 1495–1533 (STSSSSAAPASAPAPRAGAGAGATSSSAASSSTSTPSSS). Basic residues predominate over residues 1534–1546 (SHHKKSSPPHHQK). Low complexity-rich tracts occupy residues 1569–1604 (SAPI…QFSQ) and 1649–1661 (ATQQ…TSQA). Coiled-coil stretches lie at residues 1659–1685 (SQAS…AAAA) and 1725–1801 (QQYL…LQNI). The interval 1836 to 1858 (AQAQQAPPTSQPSQAATPQQQQQ) is disordered. Coiled-coil stretches lie at residues 1863 to 1961 (RQME…AAAA) and 1991 to 2041 (SAQQ…AQQK).

In terms of tissue distribution, expressed in the linker cell just before it dies.

Its subcellular location is the cytoplasm. In terms of biological role, in males, required for non-apoptotic death of the linker cell once it has finished guiding gonad elongation at the end of larval development. May be involved in nuclear envelope crenellation in the linker cell. Its function is as follows. In males, promotes linker cell survival. The protein is Polyglutamine-repeat protein pqn-41 of Caenorhabditis elegans.